We begin with the raw amino-acid sequence, 1531 residues long: Slit homolog 1 protein (1531 aa).

A signal peptide spans 1 to 33 (MALTPQRGSSSGLSRPELWLLLWAAAWRLGATA). Residues 34-61 (CPALCTCTGTTVDCHGTGLQAIPKNIPR) form the LRRNT domain. LRR repeat units lie at residues 62–83 (NTER…DFAG), 86–107 (QLRV…AFDD), 110–131 (ELER…LFQN), 134–155 (ALSR…AFRG), 158–179 (DLKN…AFRA), and 182–203 (GLEV…SFNH). Asn-72 carries an N-linked (GlcNAc...) asparagine glycan. Asn-192 is a glycosylation site (N-linked (GlcNAc...) asparagine). An LRRCT 1 domain is found at 215–265 (NHLFCDCHLAWLSQWLRQRPTIGLFTQCSGPASLRGLNVAEVQKSEFSCSG). In terms of domain architecture, LRRNT 2 spans 273–309 (PACTLSSGSCPAMCSCSNGIVDCRGKGLTAIPANLPE). A disulfide bridge connects residues Cys-286 and Cys-295. LRR repeat units follow at residues 310–331 (TMTE…AFSP), 334–355 (KLRR…AFQG), 358–379 (SLNS…VFGG), 382–403 (TLQL…AFQD), and 406–427 (NLSL…TFTS). Asn-406 carries an N-linked (GlcNAc...) asparagine glycan. Positions 439–489 (NPFICDCNLKWLADFLRTNPIETTGARCASPRRLANKRIGQIKSKKFRCSA) constitute an LRRCT 2 domain. 4 disulfides stabilise this stretch: Cys-443/Cys-466, Cys-445/Cys-487, Cys-513/Cys-519, and Cys-517/Cys-526. Residues 504–540 (NSECTSDVACPHKCRCEASVVECSGLKLSKIPERIPQ) enclose the LRRNT 3 domain. 5 LRR repeats span residues 541–562 (STTE…GLFK), 566–587 (HLKK…TFEG), 590–611 (SVSE…MFRG), 614–635 (GLRT…SFTG), and 638–659 (NVRL…AFDT). Asn-571 carries an N-linked (GlcNAc...) asparagine glycan. The N-linked (GlcNAc...) asparagine glycan is linked to Asn-630. Positions 671 to 721 (NPFNCNCQLAWLGDWLRKRKIVTGNPRCQNPDFLRQIPLQDVAFPDFRCEE) constitute an LRRCT 3 domain. 2 cysteine pairs are disulfide-bonded: Cys-675–Cys-698 and Cys-677–Cys-719. Residues 725–761 (EVGCLPRPQCPQECACLDTVVRCSNKHLQALPKGIPK) form the LRRNT 4 domain. Asn-762, Asn-801, and Asn-806 each carry an N-linked (GlcNAc...) asparagine glycan. LRR repeat units lie at residues 762-783 (NVTE…LSTF), 785-806 (YLQL…SFTN), 809-830 (QLTT…AFQG), and 833-854 (SLRL…IFAD). Residues 866–916 (NPLYCDCHLRWLSSWVKTGYKEPGIARCAGPPEMEGKLLLTTPAKKFECQG) enclose the LRRCT 4 domain. 6 EGF-like domains span residues 927–962 (DPCL…RNCE), 964–1003 (SLDS…LTCG), 1005–1041 (NTDD…RACE), 1043–1081 (LVDF…DNCS), 1083–1119 (NQDD…QLCE), and 1124–1160 (PRNS…PECE). Intrachain disulfides connect Cys-929–Cys-940, Cys-934–Cys-950, Cys-952–Cys-961, Cys-968–Cys-979, Cys-973–Cys-991, Cys-993–Cys-1002, Cys-1009–Cys-1020, Cys-1014–Cys-1029, Cys-1031–Cys-1040, Cys-1047–Cys-1060, Cys-1054–Cys-1069, Cys-1071–Cys-1080, Cys-1087–Cys-1098, Cys-1092–Cys-1107, Cys-1109–Cys-1118, Cys-1128–Cys-1139, Cys-1133–Cys-1148, and Cys-1150–Cys-1159. N-linked (GlcNAc...) asparagine glycosylation occurs at Asn-1026. Asn-1079 carries N-linked (GlcNAc...) asparagine glycosylation. The Laminin G-like domain maps to 1163–1336 (LSVNFVDRDT…QMKPGVVPGC (174 aa)). 3 N-linked (GlcNAc...) asparagine glycosylation sites follow: Asn-1186, Asn-1256, and Asn-1303. Disulfide bonds link Cys-1310-Cys-1336, Cys-1339-Cys-1349, Cys-1344-Cys-1359, Cys-1361-Cys-1370, Cys-1378-Cys-1388, Cys-1383-Cys-1398, Cys-1400-Cys-1409, Cys-1419-Cys-1429, Cys-1424-Cys-1439, Cys-1441-Cys-1450, Cys-1456-Cys-1495, Cys-1474-Cys-1509, Cys-1485-Cys-1525, and Cys-1489-Cys-1527. EGF-like domains are found at residues 1337-1371 (EPCR…LHCD), 1374-1410 (VDGP…ALCN), and 1415-1451 (VAEP…ELCE). A CTCK domain is found at 1456–1531 (CRGDPVRDFH…PTKCGCAPCA (76 aa)).

In terms of assembly, interacts with ROBO1 and GREM1. In terms of tissue distribution, in adult brains expressed in the hippocampus, cerebral cortex, and olfactory bulb but not in the cerebellum. In embryo expressed in cerebral cortex.

It localises to the secreted. Its function is as follows. Thought to act as molecular guidance cue in cellular migration, and function appears to be mediated by interaction with roundabout homolog receptors. During neural development involved in axonal navigation at the ventral midline of the neural tube and projection of axons to different regions. SLIT1 and SLIT2 together seem to be essential for midline guidance in the forebrain by acting as repulsive signal preventing inappropriate midline crossing by axons projecting from the olfactory bulb. The polypeptide is Slit homolog 1 protein (Slit1) (Rattus norvegicus (Rat)).